Reading from the N-terminus, the 144-residue chain is Large ribosomal subunit protein uL16 (144 aa).

It belongs to the universal ribosomal protein uL16 family. Part of the 50S ribosomal subunit.

Binds 23S rRNA and is also seen to make contacts with the A and possibly P site tRNAs. The sequence is that of Large ribosomal subunit protein uL16 from Caldanaerobacter subterraneus subsp. tengcongensis (strain DSM 15242 / JCM 11007 / NBRC 100824 / MB4) (Thermoanaerobacter tengcongensis).